The primary structure comprises 365 residues: RISC-loading complex subunit TARBP2 (365 aa).

Sufficient for interaction with PRKRA stretches follow at residues 22–105 (MLAA…EPAL), 151–233 (SPQQ…DARD), and 286–365 (LGAL…AGSK). A DRBM 1 domain is found at 30-97 (TPISLLQEYG…AEVALKHLKG (68 aa)). Ser151 is modified (phosphoserine). DRBM domains lie at 158–226 (NPVG…RVHT) and 292–360 (ACCS…YLRI). The interval 227–365 (VPLDARDGNE…QYLRIMAGSK (139 aa)) is sufficient for interaction with DICER1.

It belongs to the TARBP2 family. As to quaternary structure, self-associates. Component of the RISC loading complex (RLC), or micro-RNA (miRNA) loading complex (miRLC), which is composed of DICER1, AGO2 and TARBP2. Note that the trimeric RLC/miRLC is also referred to as RISC. Interacts with EIF2AK2/PKR and inhibits its protein kinase activity. Interacts with DHX9. Interacts with DICER1 and PRKRA. Interacts with DICER1, AGO2, MOV10, EIF6 and RPL7A (60S ribosome subunit); they form a large RNA-induced silencing complex (RISC). Interacts with IRF7; this interaction prevents IRF7 phosphorylation and activation.

Its subcellular location is the cytoplasm. It is found in the perinuclear region. It localises to the nucleus. Functionally, required for formation of the RNA induced silencing complex (RISC). Component of the RISC loading complex (RLC), also known as the micro-RNA (miRNA) loading complex (miRLC), which is composed of DICER1, AGO2 and TARBP2. Within the RLC/miRLC, DICER1 and TARBP2 are required to process precursor miRNAs (pre-miRNAs) to mature miRNAs and then load them onto AGO2. AGO2 bound to the mature miRNA constitutes the minimal RISC and may subsequently dissociate from DICER1 and TARBP2. May also play a role in the production of short interfering RNAs (siRNAs) from double-stranded RNA (dsRNA) by DICER1. Binds in vitro to the PRM1 3'-UTR. Seems to act as a repressor of translation. For some pre-miRNA substrates, may also alter the choice of cleavage site by DICER1. Negatively regulates IRF7-mediated IFN-beta signaling triggered by viral infection by inhibiting the phosphorylation of IRF7 and promoting its 'Lys'-48-linked ubiquitination and degradation. The chain is RISC-loading complex subunit TARBP2 (Tarbp2) from Mus musculus (Mouse).